The chain runs to 593 residues: Uncoordinated protein 58 (593 aa).

6 consecutive transmembrane segments (helical) span residues 186–206 (VILV…LMLL), 291–311 (TFPT…YGEV), 320–340 (VFSV…AADI), 402–422 (PIGA…AMFI), 430–450 (FIHA…GDIV), and 455–475 (IFLS…TMCV).

Belongs to the two pore domain potassium channel (TC 1.A.1.8) family.

It is found in the membrane. Functionally, has a role in mobility, possibly in the transport of potassium in muscles. In Caenorhabditis briggsae, this protein is Uncoordinated protein 58.